A 420-amino-acid chain; its full sequence is UDP-N-acetylglucosamine 1-carboxyvinyltransferase (420 aa).

Residue 22–23 (KN) participates in phosphoenolpyruvate binding. Arg-94 provides a ligand contact to UDP-N-acetyl-alpha-D-glucosamine. The active-site Proton donor is Cys-118. The residue at position 118 (Cys-118) is a 2-(S-cysteinyl)pyruvic acid O-phosphothioketal. The UDP-N-acetyl-alpha-D-glucosamine site is built by Asp-307 and Ile-329.

The protein belongs to the EPSP synthase family. MurA subfamily.

It is found in the cytoplasm. It carries out the reaction phosphoenolpyruvate + UDP-N-acetyl-alpha-D-glucosamine = UDP-N-acetyl-3-O-(1-carboxyvinyl)-alpha-D-glucosamine + phosphate. It participates in cell wall biogenesis; peptidoglycan biosynthesis. Functionally, cell wall formation. Adds enolpyruvyl to UDP-N-acetylglucosamine. This Granulibacter bethesdensis (strain ATCC BAA-1260 / CGDNIH1) protein is UDP-N-acetylglucosamine 1-carboxyvinyltransferase.